Consider the following 166-residue polypeptide: UBA-like domain-containing protein 2 (166 aa).

Positions 120-166 (QQPVWLPPASPTTHLHHHHHHPQPVWPPNSQPTGGPQKAMAAMDGQR) are disordered.

It belongs to the UBALD family.

The polypeptide is UBA-like domain-containing protein 2 (ubald2) (Xenopus tropicalis (Western clawed frog)).